A 520-amino-acid chain; its full sequence is MSLVRLIGAEARHLAKRSYSSAAPTTKLFIDGKFVESKTNEWIDVHDPATNQVVTRVPKATQAEMQAALESNKKAFRSWSNQSILTRQQVMFKLQALIKENMGELAKNITKEQGKTLADAEGDVLRGLQVVEHCCSIPSLQMGETVANVARDMDTYSLVLPLGVTAGVAPFNFPAMIPLWMFPVAITTGNTMLLKPSERVPGATMLLMELLNEAGCPPGVVNVIHGQHDAVNFICDAPEIKAVSFVGSDQAGKYIYERAGKNGKRVQSNMGAKNHGIILGDANKENTLNQLAGAAFGAAGQRCMALSTAVFVGDAQAWIPDLVERAQKLKVNAGHVPGTDVGPVISAASRQRINDLIESGVKEGAKLILDGRKITVPGYEDGYFVGPTILSDVTPSMKCYTEEIFGPVLVILKADTLDDAIGIVNANPYGNGTAVFTTNGAAARKFVNEIDAGQVGVNVPIPVPLPMFSFTGTRGSFRGDHHFYGKQGIKFYTQTKTVTQLWRKTDVTHTQAAVAMPTMK.

Positions 169, 171, 195, 198, 199, and 248 each coordinate NAD(+). Cysteine 303 acts as the Nucleophile in catalysis. Glutamate 403 is an NAD(+) binding site.

This sequence belongs to the aldehyde dehydrogenase family. Homotetramer.

It is found in the mitochondrion. It catalyses the reaction 2-methyl-3-oxopropanoate + NAD(+) + CoA + H2O = propanoyl-CoA + hydrogencarbonate + NADH + H(+). The enzyme catalyses 3-oxopropanoate + NAD(+) + CoA + H2O = hydrogencarbonate + acetyl-CoA + NADH + H(+). In terms of biological role, probable malonate and methylmalonate semialdehyde dehydrogenase involved in the catabolism of valine, thymine, and compounds catabolized by way of beta-alanine, including uracil and cytidine. The polypeptide is Probable methylmalonate-semialdehyde/malonate-semialdehyde dehydrogenase [acylating], mitochondrial (Drosophila melanogaster (Fruit fly)).